Consider the following 605-residue polypeptide: Zinc metalloproteinase nas-34 (605 aa).

An N-terminal signal peptide occupies residues 1–19 (MVSYWPVLIVLCLLPICHA). A propeptide spanning residues 20–124 (KSYFADFVNG…EFLYAIRGKR (105 aa)) is cleaved from the precursor. One can recognise a Peptidase M12A domain in the interval 124–322 (RSMTSFLSER…VKRINFAYCN (199 aa)). 2 disulfides stabilise this stretch: C165/C321 and C191/C211. A Zn(2+)-binding site is contributed by H219. E220 is a catalytic residue. Positions 223 and 229 each coordinate Zn(2+). Positions 317–357 (NFAYCNSTCSNYLDCQNGGYINPNDCNNCKCPPGFGGQLCD) constitute an EGF-like domain. A glycan (N-linked (GlcNAc...) asparagine) is linked at N322. 4 disulfide bridges follow: C325–C345, C347–C356, C366–C388, and C415–C436. The region spanning 366-469 (CGAGDITATS…ARFSLNYRYD (104 aa)) is the CUB domain. The segment at 479 to 526 (TTTSTTTTTAPITVPTVSPTTTTTRQTTTTARTSTTTTTTQAPPTTTT) is disordered. A TSP type-1 domain is found at 525 to 566 (TTSTSQCASWSACSAQCGGCGTQSRRCGTYVETVYCNTNPCT). 3 cysteine pairs are disulfide-bonded: C531/C551, C537/C560, and C541/C565.

Zn(2+) is required as a cofactor. Expressed in hypodermal cells. First expressed in the dorsal and lateral surface area of the middle and posterior region of embryos. At later stages, it localizes to lateral surface regions, probably corresponding to hypodermal seam cells. In L1 larvae, it is expressed in seam cells and in a few cells anterior to the nerve ring.

Its subcellular location is the secreted. Metalloprotease. Required for normal hatching and migration of neuroblasts. May act by degrading eggshell proteins at hatching. This is Zinc metalloproteinase nas-34 (hch-1) from Caenorhabditis elegans.